Reading from the N-terminus, the 339-residue chain is Ketol-acid reductoisomerase (NADP(+)) (339 aa).

One can recognise a KARI N-terminal Rossmann domain in the interval 1-182 (MRVYYDRDAD…GGGRSGVIET (182 aa)). NADP(+)-binding positions include 24 to 27 (YGSQ), R48, S51, T53, and 83 to 86 (DELQ). H108 is a catalytic residue. G134 is an NADP(+) binding site. The region spanning 183 to 328 (TFKEECETDL…GKLRAMMPWI (146 aa)) is the KARI C-terminal knotted domain. D191, E195, E227, and E231 together coordinate Mg(2+). S252 is a substrate binding site.

It belongs to the ketol-acid reductoisomerase family. Mg(2+) is required as a cofactor.

It catalyses the reaction (2R)-2,3-dihydroxy-3-methylbutanoate + NADP(+) = (2S)-2-acetolactate + NADPH + H(+). The catalysed reaction is (2R,3R)-2,3-dihydroxy-3-methylpentanoate + NADP(+) = (S)-2-ethyl-2-hydroxy-3-oxobutanoate + NADPH + H(+). It participates in amino-acid biosynthesis; L-isoleucine biosynthesis; L-isoleucine from 2-oxobutanoate: step 2/4. It functions in the pathway amino-acid biosynthesis; L-valine biosynthesis; L-valine from pyruvate: step 2/4. Functionally, involved in the biosynthesis of branched-chain amino acids (BCAA). Catalyzes an alkyl-migration followed by a ketol-acid reduction of (S)-2-acetolactate (S2AL) to yield (R)-2,3-dihydroxy-isovalerate. In the isomerase reaction, S2AL is rearranged via a Mg-dependent methyl migration to produce 3-hydroxy-3-methyl-2-ketobutyrate (HMKB). In the reductase reaction, this 2-ketoacid undergoes a metal-dependent reduction by NADPH to yield (R)-2,3-dihydroxy-isovalerate. This is Ketol-acid reductoisomerase (NADP(+)) from Brucella canis (strain ATCC 23365 / NCTC 10854 / RM-666).